Consider the following 709-residue polypeptide: Frizzled-6 (709 aa).

A signal peptide spans 1–18 (MERSPFLLACILLPLVRG). In terms of domain architecture, FZ spans 19–132 (HSLFTCEPIT…CNRLPHCDDT (114 aa)). The Extracellular portion of the chain corresponds to 19–201 (HSLFTCEPIT…SDELDFAKSF (183 aa)). Intrachain disulfides connect cysteine 24/cysteine 85, cysteine 32/cysteine 78, cysteine 69/cysteine 106, cysteine 95/cysteine 129, and cysteine 99/cysteine 123. Asparagine 38 carries an N-linked (GlcNAc...) asparagine glycan. Residues 202–222 (IGIVSIFCLCATLFTFLTFLI) form a helical membrane-spanning segment. At 223 to 233 (DVRRFRYPERP) the chain is on the cytoplasmic side. Residues 234–254 (IIYYSVCYSIVSLMYFVGFLL) traverse the membrane as a helical segment. Residues 255-284 (GNSTACNKADEKLELGDTVVLGSKNKACSV) are Extracellular-facing. Asparagine 256 carries an N-linked (GlcNAc...) asparagine glycan. A helical membrane pass occupies residues 285–305 (VFMFLYFFTMAGTVWWVILTI). Residues 306-324 (TWFLAAGRKWSCEAIEQKA) are Cytoplasmic-facing. A helical transmembrane segment spans residues 325-345 (VWFHAVAWGAPGFLTVMLLAM). Over 346–370 (NKVEGDNISGVCFVGLYDLDASRYF) the chain is Extracellular. Residue asparagine 352 is glycosylated (N-linked (GlcNAc...) asparagine). The chain crosses the membrane as a helical span at residues 371 to 391 (VLLPLCLCVFVGLSLLLAGII). Topologically, residues 392–416 (SLNHVRQVIQHDGRNQEKLKKFMIR) are cytoplasmic. A helical transmembrane segment spans residues 417-437 (IGVFSGLYLVPLVTLLGCYVY). Over 438–473 (ELVNRITWEMTWFSDHCHQYRIPCPYQANPKARPEL) the chain is Extracellular. Residues 474 to 494 (ALFMIKYLMTLIVGISAVFWV) traverse the membrane as a helical segment. Residues 495–709 (GSKKTCTEWA…EQGAGSHSDA (215 aa)) are Cytoplasmic-facing. Positions 498–503 (KTCTEW) match the Lys-Thr-X-X-X-Trp motif, mediates interaction with the PDZ domain of Dvl family members motif. Over residues 583 to 594 (QETSTEVHTSPE) the composition is skewed to polar residues. A disordered region spans residues 583 to 709 (QETSTEVHTS…EQGAGSHSDA (127 aa)). Basic and acidic residues predominate over residues 596-616 (SVKEGRADRANTPSAKDRDCG). Residues 620-629 (GPSSKLSGNR) are compositionally biased toward polar residues. The span at 630 to 644 (NGRESRAGGLKERSN) shows a compositional bias: basic and acidic residues. Serine 656 is subject to Phosphoserine. Residues 669 to 690 (CSTSQAASSPEPTSLKGSTSLP) show a composition bias toward polar residues. Residues 697 to 709 (ARKEQGAGSHSDA) are compositionally biased toward basic and acidic residues.

This sequence belongs to the G-protein coupled receptor Fz/Smo family. Interacts with LMBR1L. In terms of processing, ubiquitinated by ZNRF3, leading to its degradation by the proteasome. In terms of tissue distribution, expressed in both hair cells and supporting cells in the utricle, saccule, cristae and the organ of Corti in the inner ear (at protein level).

The protein localises to the membrane. It localises to the cell membrane. Its subcellular location is the cell surface. It is found in the apical cell membrane. The protein resides in the cytoplasmic vesicle membrane. The protein localises to the endoplasmic reticulum membrane. Functionally, receptor for Wnt proteins. Most of frizzled receptors are coupled to the beta-catenin canonical signaling pathway, which leads to the activation of disheveled proteins, inhibition of GSK-3 kinase, nuclear accumulation of beta-catenin and activation of Wnt target genes. A second signaling pathway involving PKC and calcium fluxes has been seen for some family members, but it is not yet clear if it represents a distinct pathway or if it can be integrated in the canonical pathway, as PKC seems to be required for Wnt-mediated inactivation of GSK-3 kinase. Both pathways seem to involve interactions with G-proteins. Activation by Wnt5A stimulates PKC activity via a G-protein-dependent mechanism. Involved in transduction and intercellular transmission of polarity information during tissue morphogenesis and/or in differentiated tissues. Together with FZD3, is involved in the neural tube closure and plays a role in the regulation of the establishment of planar cell polarity (PCP), particularly in the orientation of asymmetric bundles of stereocilia on the apical faces of a subset of auditory and vestibular sensory cells located in the inner ear. The protein is Frizzled-6 (Fzd6) of Mus musculus (Mouse).